Here is a 502-residue protein sequence, read N- to C-terminus: Maturase K (502 aa).

The protein belongs to the intron maturase 2 family. MatK subfamily.

It is found in the plastid. It localises to the chloroplast. Its function is as follows. Usually encoded in the trnK tRNA gene intron. Probably assists in splicing its own and other chloroplast group II introns. This chain is Maturase K, found in Tilia americana (American basswood).